Consider the following 434-residue polypeptide: Adenylosuccinate synthetase (434 aa).

GTP contacts are provided by residues 25-31 (GDEGKGK) and 53-55 (GHT). Asp-26 (proton acceptor) is an active-site residue. Asp-26 and Gly-53 together coordinate Mg(2+). Residues 26–29 (DEGK), 51–54 (NAGH), Thr-142, Arg-156, Asn-233, Thr-248, and Arg-312 contribute to the IMP site. The active-site Proton donor is His-54. 308–314 (VTTGRKR) contributes to the substrate binding site. GTP contacts are provided by residues Arg-314, 340-342 (KLD), and 422-424 (GVG).

Belongs to the adenylosuccinate synthetase family. In terms of assembly, homodimer. It depends on Mg(2+) as a cofactor.

The protein resides in the cytoplasm. The enzyme catalyses IMP + L-aspartate + GTP = N(6)-(1,2-dicarboxyethyl)-AMP + GDP + phosphate + 2 H(+). The protein operates within purine metabolism; AMP biosynthesis via de novo pathway; AMP from IMP: step 1/2. Competitively Inhibited by GMP. Allosterically inhibited by AMP. Functionally, plays an important role in the de novo pathway and in the salvage pathway of purine nucleotide biosynthesis. Catalyzes the first committed step in the biosynthesis of AMP from IMP. This Schizosaccharomyces pombe (strain 972 / ATCC 24843) (Fission yeast) protein is Adenylosuccinate synthetase (ade2).